A 372-amino-acid chain; its full sequence is UDP-N-acetylenolpyruvoylglucosamine reductase (372 aa).

Residues 29–205 (VGPTARRLIT…LEVEFALDAS (177 aa)) enclose the FAD-binding PCMH-type domain. Residue Arg-177 is part of the active site. The Proton donor role is filled by Ser-260. Residue Glu-364 is part of the active site.

This sequence belongs to the MurB family. The cofactor is FAD.

Its subcellular location is the cytoplasm. The catalysed reaction is UDP-N-acetyl-alpha-D-muramate + NADP(+) = UDP-N-acetyl-3-O-(1-carboxyvinyl)-alpha-D-glucosamine + NADPH + H(+). It participates in cell wall biogenesis; peptidoglycan biosynthesis. Functionally, cell wall formation. The chain is UDP-N-acetylenolpyruvoylglucosamine reductase from Mycobacterium avium (strain 104).